A 707-amino-acid chain; its full sequence is MNPVKKTFQYGHSTVTLETGRIARQATGAVMVTMDDTVVLCTVVAKKDVNPAQPFFPLSVHYQEKTYAVGKIPGGFFKREGRPTEKETLTSRLIDRPIRPLFPNGFMNEVQVVCTVLSTDRNHDPDIAAMLGTSAALAISGVPFNGPIGAARVGFNEDKGYFLNPTVEELESSELNMVVAGTEKAVLMVESEAKELLEDEMLGAVLFGHQEMQAAITAIQALADEAGKPRWDWQPPTDDTTLKSALAAEFEAKVGEAYRITDKMARQDALSALKDEALERLAGEESGQYAADDVKGAFASLEKRVVRSRIIQGEPRIDGRDHRTVRPLSIEVGTLPKTHGSAVFTRGETQAVVVATLGTLRDAQLIESLEGERKDRFLLHYNFPPYSVGEAGFMGGPKRREIGHGRLARRGVQAMLPSEEDFPYTIRVVSEITESNGSSSMASVCGSSLALMDAGVPLKAPVAGIAMGLVKDEDGFAVLTDILGDEDHLGDMDFKVAGSTAGVTALQMDIKIEGINEEIMETALQQAHEARLHILEQMNTVIAQSRSEVSDNAPSMATIKIDPDKIRDVIGKGGATIRKICDDTGASIDLDDDGTVRIYAEDKTAAKAAIDTVLAITAEPEIGKLYRGTVARITDFGAFVTFMPGTDGLVHISQIVPERVNDVRDYLSEGQEVIVKVLDIDNRNRVKLSIKEVTAEEKAAFEATPAE.

The Mg(2+) site is built by aspartate 487 and aspartate 493. A KH domain is found at 554–613 (PSMATIKIDPDKIRDVIGKGGATIRKICDDTGASIDLDDDGTVRIYAEDKTAAKAAIDTV). The 69-residue stretch at 623–691 (GKLYRGTVAR…NRNRVKLSIK (69 aa)) folds into the S1 motif domain.

It belongs to the polyribonucleotide nucleotidyltransferase family. Component of the RNA degradosome, which is a multiprotein complex involved in RNA processing and mRNA degradation. Requires Mg(2+) as cofactor.

It is found in the cytoplasm. The catalysed reaction is RNA(n+1) + phosphate = RNA(n) + a ribonucleoside 5'-diphosphate. Involved in mRNA degradation. Catalyzes the phosphorolysis of single-stranded polyribonucleotides processively in the 3'- to 5'-direction. In Chromohalobacter salexigens (strain ATCC BAA-138 / DSM 3043 / CIP 106854 / NCIMB 13768 / 1H11), this protein is Polyribonucleotide nucleotidyltransferase.